We begin with the raw amino-acid sequence, 573 residues long: SHC-transforming protein 2 (573 aa).

Positions 125–309 constitute a PID domain; the sequence is LGPGVSYIVR…LEELAWGDDD (185 aa). The tract at residues 310–477 is CH1; sequence AAADHNYYNS…PTEEQLRQEP (168 aa). Tyr316, Tyr317, and Tyr395 each carry phosphotyrosine. The region spanning 478-569 is the SH2 domain; sequence WYHGRMSRRA…ESELHLRGVV (92 aa).

As to quaternary structure, interacts with the Trk receptors in a phosphotyrosine-dependent manner and MEGF12. Once activated, binds to GRB2. Post-translationally, phosphorylated on tyrosine by the Trk receptors. As to expression, expressed in brain. Expressed at high level in the hypothalamus and at low level in the caudate nucleus.

In terms of biological role, signaling adapter that couples activated growth factor receptors to signaling pathway in neurons. Involved in the signal transduction pathways of neurotrophin-activated Trk receptors in cortical neurons. In Mus musculus (Mouse), this protein is SHC-transforming protein 2 (Shc2).